The following is a 567-amino-acid chain: Proton-coupled zinc antiporter SLC30A9, mitochondrial (567 aa).

A run of 5 helical transmembrane segments spans residues 238–258 (VVMVAICINGLNCFFKFLAWI), 313–333 (GVGIFMMGAGLSWYHGIMGLL), 341–361 (LLWAYCILAGSLVSEGATLLV), 391–411 (VILLEDTAAVLGVIIAATCMG), and 423–443 (SLGSLGVGTLLGVVSAFLIYT). The LXXLL motif motif lies at 461-465 (LTELL).

This sequence belongs to the cation diffusion facilitator (CDF) transporter (TC 2.A.4) family. SLC30A subfamily. In terms of assembly, interacts with GRIP1, ESR1, AR and CTNNB1.

Its subcellular location is the mitochondrion membrane. It is found in the nucleus. The protein resides in the endoplasmic reticulum. The catalysed reaction is Zn(2+)(in) + 2 H(+)(out) = Zn(2+)(out) + 2 H(+)(in). Acts as a zinc transporter involved in intracellular zinc homeostasis. Functions as a secondary coactivator for nuclear receptors by cooperating with p160 coactivators subtypes. Plays a role in transcriptional activation of Wnt-responsive genes. Functionally, mitochondrial proton-coupled zinc ion antiporter mediating the export of zinc from the mitochondria and involved in zinc homeostasis, zinc mobilization as well as mitochondrial morphology and health. In nucleus, functions as a secondary coactivator for nuclear receptors by cooperating with p160 coactivators subtypes. Plays a role in transcriptional activation of Wnt-responsive genes. The protein is Proton-coupled zinc antiporter SLC30A9, mitochondrial (Slc30a9) of Mus musculus (Mouse).